Reading from the N-terminus, the 2182-residue chain is Autophagy-related protein 2 (2182 aa).

6 disordered regions span residues 291-375, 392-426, 523-630, 663-682, 736-758, and 793-816; these read SPSL…PLAD, EQDY…ATPR, YTHE…STTL, DIDP…VATP, GAFS…SSVE, and DKKP…SKET. Composition is skewed to polar residues over residues 303–313 and 322–331; these read NPPSRQATELS and VSSSQASIRS. Positions 332–347 are enriched in basic and acidic residues; the sequence is NEPESASHHSLPENDH. 2 stretches are compositionally biased toward acidic residues: residues 528–540 and 613–624; these read AENE…EQTT and WDDDYDDPEEEP. The segment covering 745-758 has biased composition (polar residues); it reads HAQQRSSQGTSSVE. Residues 793–813 are compositionally biased toward basic and acidic residues; it reads DKKPSPAEGSKQDTASKDAPS.

Belongs to the ATG2 family. As to quaternary structure, interacts with ATG18.

Its subcellular location is the preautophagosomal structure membrane. It is found in the endoplasmic reticulum membrane. The enzyme catalyses a 1,2-diacyl-sn-glycero-3-phosphocholine(in) = a 1,2-diacyl-sn-glycero-3-phosphocholine(out). It carries out the reaction a 1,2-diacyl-sn-glycero-3-phospho-L-serine(in) = a 1,2-diacyl-sn-glycero-3-phospho-L-serine(out). The catalysed reaction is a 1,2-diacyl-sn-glycero-3-phosphoethanolamine(in) = a 1,2-diacyl-sn-glycero-3-phosphoethanolamine(out). Lipid transfer protein required for autophagosome completion and peroxisome degradation and peroxisome degradation. Tethers the edge of the isolation membrane (IM) to the endoplasmic reticulum (ER) and mediates direct lipid transfer from ER to IM for IM expansion. ATG2 binds to the ER exit site (ERES), which is the membrane source for autophagosome formation, using basic residues in its N-terminal region (NR) and to the expanding edge of the IM through its C-terminal region. The latter binding is assisted by an ATG18-PtdIns3P interaction. ATG2 then extracts phospholipids from the membrane source using its NR and transfers them to ATG9 to the IM through its predicted beta-sheet-rich structure for membrane expansion. Autophagy is required for proper vegetative growth, asexual/sexual reproduction, and full virulence. Autophagy is particularly involved in the biosynthesis of deoxynivalenol (DON), an important virulence determinant. The sequence is that of Autophagy-related protein 2 from Gibberella zeae (strain ATCC MYA-4620 / CBS 123657 / FGSC 9075 / NRRL 31084 / PH-1) (Wheat head blight fungus).